The primary structure comprises 382 residues: Layilin (382 aa).

The N-terminal stretch at 1–21 is a signal peptide; that stretch reads MRPGTALQAVLLAVLLVGLRA. Residues 22–235 lie on the Extracellular side of the membrane; the sequence is ATGRLLSASD…SREAALNLAY (214 aa). The C-type lectin domain occupies 45-185; that stretch reads TQRPCYKVIY…CNMKNNFICK (141 aa). 2 disulfides stabilise this stretch: cysteine 71-cysteine 184 and cysteine 150-cysteine 176. N-linked (GlcNAc...) asparagine glycosylation occurs at asparagine 117. Residues 236 to 256 traverse the membrane as a helical segment; the sequence is ILIPSIPLLLLLVVTTVVCWV. Residues 257–382 lie on the Cytoplasmic side of the membrane; it reads WICRKRKREQ…GWVENEIYGY (126 aa). The interval 266 to 285 is disordered; sequence QPDPSTKKQHTIWPSPHQGN. 2 positions are modified to phosphoserine: serine 286 and serine 299. Residues 330 to 374 are interaction with NF2; the sequence is DYDNMAVNPSESGFVTLVSVESGFVTNDIYEFSPDQMGRSKESGW. Residues 337-382 form an interaction with TLN1 region; the sequence is NPSESGFVTLVSVESGFVTNDIYEFSPDQMGRSKESGWVENEIYGY. A run of 5 repeats spans residues 340-344, 350-354, 356-359, 371-375, and 377-380. Positions 340-375 are 3 X 5 AA repeats of E-S-G-X-V; sequence ESGFVTLVSVESGFVTNDIYEFSPDQMGRSKESGWV. The segment at 356–380 is 2 X 4 AA repeats of N-X-I-Y; it reads NDIYEFSPDQMGRSKESGWVENEIY.

In terms of assembly, interacts with NF2, RDX and TLN1.

It is found in the membrane. Its function is as follows. Receptor for hyaluronate. The chain is Layilin (LAYN) from Homo sapiens (Human).